Consider the following 412-residue polypeptide: Aurora kinase (412 aa).

Residues 94 to 119 (NEKVRPSKSSHIPVKSPIRKKGHSPA) are disordered. Residues 148–401 (FEIGKVLGKG…LAEVMNHPWI (254 aa)) form the Protein kinase domain. ATP-binding positions include 154–162 (LGKGKLGKV) and lysine 177. Aspartate 271 serves as the catalytic Proton acceptor.

It belongs to the protein kinase superfamily. Ser/Thr protein kinase family. Aurora subfamily.

The protein localises to the nucleus. It is found in the cytoplasm. Its subcellular location is the cytoskeleton. The protein resides in the spindle. It localises to the chromosome. The protein localises to the centromere. It is found in the kinetochore. It catalyses the reaction L-seryl-[protein] + ATP = O-phospho-L-seryl-[protein] + ADP + H(+). The catalysed reaction is L-threonyl-[protein] + ATP = O-phospho-L-threonyl-[protein] + ADP + H(+). Its function is as follows. Component of the chromosomal passenger complex (CPC), a complex that acts as a key regulator of chromosome segregation and cytokinesis. Has a role in error-correction of aberrent kinetochore-microtubule attachments to ensure that sister kinetochores become bioriented and connect to opposite poles by promoting spindle assembly checkpoint signaling. This Debaryomyces hansenii (strain ATCC 36239 / CBS 767 / BCRC 21394 / JCM 1990 / NBRC 0083 / IGC 2968) (Yeast) protein is Aurora kinase (IPL1).